Here is a 197-residue protein sequence, read N- to C-terminus: A-type ATP synthase subunit E (197 aa).

This sequence belongs to the V-ATPase E subunit family. Has multiple subunits with at least A(3), B(3), C, D, E, F, H, I and proteolipid K(x).

It is found in the cell membrane. Functionally, component of the A-type ATP synthase that produces ATP from ADP in the presence of a proton gradient across the membrane. This chain is A-type ATP synthase subunit E, found in Thermococcus gammatolerans (strain DSM 15229 / JCM 11827 / EJ3).